The primary structure comprises 184 residues: MTQRLKTFYLNTVVPKLRKQLEYQNIHQVPQVTKIVINCGLGEASQNAKSLESTLRDLSFITGQKPIVTRAKKSIAGFQIRAQMSVGVCVTLRADAMYAFLDRLIHLALPRIRDFQGLNSNSFDGHGNFHLGLKEQLMFPEIDYDKIEKLRGMDICIVTSSQNNKEALQLLVALGMPFQTTLTA.

It belongs to the universal ribosomal protein uL5 family. In terms of assembly, part of the 50S ribosomal subunit; contacts the 5S rRNA.

It is found in the plastid. The protein localises to the chloroplast. Its function is as follows. Binds 5S rRNA, forms part of the central protuberance of the 50S subunit. In Zygnema circumcarinatum (Green alga), this protein is Large ribosomal subunit protein uL5c (rpl5).